The primary structure comprises 444 residues: MLKIALESLGCSKNLVDAEIMMGILNNKGYKLIGDFEEADVIIVNTCGFIESAKQESIDTIINFAELKKTGNLKLLIVTGCLAQRYSEELKTEIPEIDAIVGTGSYQNIDKILKELSEIHQIVSLNDIEFVFNEDLPRYISTPSYMAYLKIGEGCSNNCTYCIIPKLRGKYRSRKFEDIIKEAKKLAESGVKELVVIAQDTTKYGFDLYGKERLSELLEELAKIDGFKWIRVMYSYPESITEELIQVIKKYDNICSYFDMPIQHASNNILKLMNRKTTKEDILNKINLIRSNIPDAILRTTIIVGFPGETEDDFKQLVDFVEEVKFDRLGAFAYSREEDTPADRLPNHIDEEVKIQRRDTLMMIQQKISEELNDKKIGKTYEVLIEEQIEDNVYTGRTQGDAEEIDSIVYVKSVDNLEVGEFVSVQINDAMEYDLMGDVLYELA.

An MTTase N-terminal domain is found at 2-118; it reads LKIALESLGC…IDKILKELSE (117 aa). [4Fe-4S] cluster is bound by residues cysteine 11, cysteine 47, cysteine 81, cysteine 155, cysteine 159, and cysteine 162. The Radical SAM core domain maps to 141–371; it reads STPSYMAYLK…MMIQQKISEE (231 aa). In terms of domain architecture, TRAM spans 374–441; that stretch reads DKKIGKTYEV…EYDLMGDVLY (68 aa).

Belongs to the methylthiotransferase family. RimO subfamily. It depends on [4Fe-4S] cluster as a cofactor.

Its subcellular location is the cytoplasm. It catalyses the reaction L-aspartate(89)-[ribosomal protein uS12]-hydrogen + (sulfur carrier)-SH + AH2 + 2 S-adenosyl-L-methionine = 3-methylsulfanyl-L-aspartate(89)-[ribosomal protein uS12]-hydrogen + (sulfur carrier)-H + 5'-deoxyadenosine + L-methionine + A + S-adenosyl-L-homocysteine + 2 H(+). Functionally, catalyzes the methylthiolation of an aspartic acid residue of ribosomal protein uS12. The polypeptide is Ribosomal protein uS12 methylthiotransferase RimO (Clostridioides difficile (strain 630) (Peptoclostridium difficile)).